The following is a 194-amino-acid chain: Small ribosomal subunit protein uS4c (194 aa).

In terms of domain architecture, S4 RNA-binding spans 84-144 (MRLDTLLYRT…KEILKSLNDK (61 aa)).

The protein belongs to the universal ribosomal protein uS4 family. Part of the 30S ribosomal subunit. Contacts protein S5. The interaction surface between S4 and S5 is involved in control of translational fidelity.

It localises to the plastid. The protein resides in the chloroplast. Functionally, one of the primary rRNA binding proteins, it binds directly to 16S rRNA where it nucleates assembly of the body of the 30S subunit. In terms of biological role, with S5 and S12 plays an important role in translational accuracy. This chain is Small ribosomal subunit protein uS4c (rps4), found in Bigelowiella natans (Pedinomonas minutissima).